The primary structure comprises 458 residues: Vacuolar basic amino acid transporter 3 (458 aa).

At Met-1 to Val-9 the chain is on the cytoplasmic side. The helical transmembrane segment at Val-10–Val-30 threads the bilayer. Over Gly-31–Pro-36 the chain is Vacuolar. The helical transmembrane segment at Leu-37 to Gly-57 threads the bilayer. At Gly-58–Arg-67 the chain is on the cytoplasmic side. The helical transmembrane segment at Trp-68–Tyr-88 threads the bilayer. At Lys-89–Asp-132 the chain is on the vacuolar side. The chain crosses the membrane as a helical span at residues Phe-133–Gly-153. Over Gly-154–Gln-163 the chain is Cytoplasmic. The helical transmembrane segment at Val-164–Phe-184 threads the bilayer. Over Leu-185 to Arg-205 the chain is Vacuolar. A glycan (N-linked (GlcNAc...) asparagine) is linked at Asn-195. Residues Leu-206–Tyr-226 traverse the membrane as a helical segment. Topologically, residues Asn-227–Ala-248 are cytoplasmic. A helical transmembrane segment spans residues Gly-249–Ile-269. Residues Thr-270–Lys-277 lie on the Vacuolar side of the membrane. A helical transmembrane segment spans residues Pro-278–Thr-298. The Cytoplasmic portion of the chain corresponds to Asn-299–Gln-306. A helical membrane pass occupies residues Ile-307–Ser-327. Over Ala-328 to Ser-415 the chain is Vacuolar. A helical transmembrane segment spans residues Ile-416 to Phe-436. The Cytoplasmic segment spans residues Ser-437–Lys-458.

It belongs to the major facilitator superfamily.

Its subcellular location is the vacuole membrane. Transporter required for vacuolar uptake of histidine and lysine. The protein is Vacuolar basic amino acid transporter 3 (VBA3) of Saccharomyces cerevisiae (strain ATCC 204508 / S288c) (Baker's yeast).